The primary structure comprises 391 residues: Ferrochelatase (391 aa).

2 residues coordinate Fe cation: His-196 and Glu-281.

The protein belongs to the ferrochelatase family.

The protein localises to the cytoplasm. It catalyses the reaction heme b + 2 H(+) = protoporphyrin IX + Fe(2+). The protein operates within porphyrin-containing compound metabolism; protoheme biosynthesis; protoheme from protoporphyrin-IX: step 1/1. Functionally, catalyzes the ferrous insertion into protoporphyrin IX. In Parasynechococcus marenigrum (strain WH8102), this protein is Ferrochelatase.